The primary structure comprises 666 residues: ATP-dependent zinc metalloprotease FtsH (666 aa).

Residues 1-6 lie on the Cytoplasmic side of the membrane; it reads MKSETG. The chain crosses the membrane as a helical span at residues 7-27; sequence YMGFVVVLVFMVLLALQLATL. At 28–116 the chain is on the periplasmic side; the sequence is SAPATQIAYS…TRYRGADDDT (89 aa). Residues 117-137 traverse the membrane as a helical segment; that stretch reads WIGTLASWIVPIAVFALVWNL. Residues 138 to 666 lie on the Cytoplasmic side of the membrane; it reads MLRRPRGGLQ…ADNADHSVPQ (529 aa). An ATP-binding site is contributed by 210 to 217; the sequence is GAPGTGKT. Position 432 (His432) interacts with Zn(2+). Glu433 is an active-site residue. Zn(2+) is bound by residues His436 and Asp509. Residues 612-666 are disordered; that stretch reads NDEPTPEPGARDPGGDAAKRSGIGAAPAKPPAEVGSAELRDPARKADNADHSVPQ. Basic and acidic residues-rich tracts occupy residues 620–630 and 649–666; these read GARDPGGDAAK and ELRD…SVPQ.

It in the central section; belongs to the AAA ATPase family. This sequence in the C-terminal section; belongs to the peptidase M41 family. In terms of assembly, homohexamer. It depends on Zn(2+) as a cofactor.

Its subcellular location is the cell inner membrane. In terms of biological role, acts as a processive, ATP-dependent zinc metallopeptidase for both cytoplasmic and membrane proteins. Plays a role in the quality control of integral membrane proteins. The polypeptide is ATP-dependent zinc metalloprotease FtsH (Burkholderia pseudomallei (strain 1710b)).